Reading from the N-terminus, the 291-residue chain is N-acetylmannosamine kinase (291 aa).

ATP contacts are provided by residues 5-12 (AVDIGGTK) and 132-139 (GVGGGIVV). Residues H156, C166, C168, and C173 each contribute to the Zn(2+) site.

Belongs to the ROK (NagC/XylR) family. NanK subfamily. Homodimer.

The catalysed reaction is an N-acyl-D-mannosamine + ATP = an N-acyl-D-mannosamine 6-phosphate + ADP + H(+). It participates in amino-sugar metabolism; N-acetylneuraminate degradation; D-fructose 6-phosphate from N-acetylneuraminate: step 2/5. Its function is as follows. Catalyzes the phosphorylation of N-acetylmannosamine (ManNAc) to ManNAc-6-P. In Escherichia coli O6:H1 (strain CFT073 / ATCC 700928 / UPEC), this protein is N-acetylmannosamine kinase (nanK2).